The following is a 326-amino-acid chain: DNA-directed RNA polymerase subunit alpha (326 aa).

Positions 1–232 are alpha N-terminal domain (alpha-NTD); the sequence is MQSATEFLKP…SQLSVFADLE (232 aa). Residues 246–326 are alpha C-terminal domain (alpha-CTD); it reads VDPLLLRPVD…NWPPAGLERP (81 aa).

The protein belongs to the RNA polymerase alpha chain family. As to quaternary structure, homodimer. The RNAP catalytic core consists of 2 alpha, 1 beta, 1 beta' and 1 omega subunit. When a sigma factor is associated with the core the holoenzyme is formed, which can initiate transcription.

It catalyses the reaction RNA(n) + a ribonucleoside 5'-triphosphate = RNA(n+1) + diphosphate. Functionally, DNA-dependent RNA polymerase catalyzes the transcription of DNA into RNA using the four ribonucleoside triphosphates as substrates. This chain is DNA-directed RNA polymerase subunit alpha, found in Thiobacillus denitrificans (strain ATCC 25259 / T1).